The chain runs to 968 residues: RNA polymerase-associated protein RapA (968 aa).

The Helicase ATP-binding domain maps to 164-334 (DVGRRHAPRV…FARLRLLDPN (171 aa)). An ATP-binding site is contributed by 177–184 (DEVGLGKT). Residues 280 to 283 (DEAH) carry the DEAH box motif. A Helicase C-terminal domain is found at 490–685 (RVEWLMGYLT…ALKAQLEQGR (196 aa)).

It belongs to the SNF2/RAD54 helicase family. RapA subfamily. In terms of assembly, interacts with the RNAP. Has a higher affinity for the core RNAP than for the holoenzyme. Its ATPase activity is stimulated by binding to RNAP.

In terms of biological role, transcription regulator that activates transcription by stimulating RNA polymerase (RNAP) recycling in case of stress conditions such as supercoiled DNA or high salt concentrations. Probably acts by releasing the RNAP, when it is trapped or immobilized on tightly supercoiled DNA. Does not activate transcription on linear DNA. Probably not involved in DNA repair. The chain is RNA polymerase-associated protein RapA from Salmonella paratyphi A (strain ATCC 9150 / SARB42).